Reading from the N-terminus, the 186-residue chain is Fucolectin-6 (186 aa).

The signal sequence occupies residues 1–32 (MKTCNLTDRMKVKMIMLLFQILAISTLQSVSA). An F5/8 type C-like region spans residues 40–186 (QENVAVRGKA…VEVNAMLPAN (147 aa)). Residues asparagine 67, aspartate 70, asparagine 72, and serine 81 each coordinate Ca(2+). Intrachain disulfides connect cysteine 82–cysteine 175, cysteine 114–cysteine 115, and cysteine 137–cysteine 153. 2 residues coordinate alpha-L-fucose: histidine 84 and arginine 111. A Cell attachment site motif is present at residues 111–113 (RGD). Arginine 118 contributes to the alpha-L-fucose binding site. Positions 175 and 176 each coordinate Ca(2+).

This sequence belongs to the fucolectin family. Homotrimer. In terms of tissue distribution, gill mucous cells.

It localises to the secreted. In terms of biological role, acts as a defensive agent. Recognizes blood group fucosylated oligosaccharides including A, B, H and Lewis B-type antigens. Does not recognize Lewis A antigen and has low affinity for monovalent haptens. In Anguilla japonica (Japanese eel), this protein is Fucolectin-6.